The chain runs to 445 residues: ATP-dependent protease ATPase subunit HslU (445 aa).

ATP-binding positions include I17, 59–64 (GVGKTE), D254, E319, and R391.

Belongs to the ClpX chaperone family. HslU subfamily. A double ring-shaped homohexamer of HslV is capped on each side by a ring-shaped HslU homohexamer. The assembly of the HslU/HslV complex is dependent on binding of ATP.

The protein localises to the cytoplasm. Functionally, ATPase subunit of a proteasome-like degradation complex; this subunit has chaperone activity. The binding of ATP and its subsequent hydrolysis by HslU are essential for unfolding of protein substrates subsequently hydrolyzed by HslV. HslU recognizes the N-terminal part of its protein substrates and unfolds these before they are guided to HslV for hydrolysis. This chain is ATP-dependent protease ATPase subunit HslU, found in Pseudomonas savastanoi pv. phaseolicola (strain 1448A / Race 6) (Pseudomonas syringae pv. phaseolicola (strain 1448A / Race 6)).